The following is a 264-amino-acid chain: Galectin-3 (264 aa).

A disordered region spans residues 1–105 (MADSFSLNDA…GAFPGQPGAP (105 aa)). Ala2 is subject to N-acetylalanine. A Phosphoserine; by CK1 modification is found at Ser6. 8 repeat units span residues 35 to 43 (YPGAAYPGA), 44 to 52 (YPGQAPPGA), 53 to 61 (YPGQAPPGA), 62 to 70 (YPGQAPPSA), 71 to 79 (YPGPTAPGA), 80 to 88 (YPGPTAPGA), 89 to 97 (YPGQPAPGA), and 98 to 107 (FPGQPGAPGA). The 9 X 9 AA tandem repeats of Y-P-G-X(3)-P-[GS]-A stretch occupies residues 35-114 (YPGAAYPGAY…PGAYPQCSGG (80 aa)). Low complexity predominate over residues 37–46 (GAAYPGAYPG). Residues 47-75 (QAPPGAYPGQAPPGAYPGQAPPSAYPGPT) are compositionally biased toward pro residues. Positions 76 to 105 (APGAYPGPTAPGAYPGQPAPGAFPGQPGAP) are enriched in low complexity. The 9; truncated repeat unit spans residues 108 to 114 (YPQCSGG). A Galectin domain is found at 132 to 262 (YDLPLPGGVM…DITLTSANHA (131 aa)). 195–201 (WGKEERQ) serves as a coordination point for a beta-D-galactoside. At Ser202 the chain carries Phosphoserine. The short motif at 240–255 (KNLREISQLGISGDIT) is the Nuclear export signal element.

Probably forms homo- or heterodimers. Interacts with DMBT1. Interacts with CD6 and ALCAM. Forms a complex with the ITGA3, ITGB1 and CSPG4. Interacts with LGALS3BP, LYPD3, ZFTRAF1 and UACA. Interacts with TRIM16; this interaction mediates autophagy of damage endomembranes. Interacts with and inhibits by binding NCR3/NKp30. As to expression, the highest levels are found in activated macrophages.

It is found in the cytoplasm. The protein localises to the nucleus. The protein resides in the secreted. Galactose-specific lectin which binds IgE. May mediate with the alpha-3, beta-1 integrin the stimulation by CSPG4 of endothelial cells migration. Together with DMBT1, required for terminal differentiation of columnar epithelial cells during early embryogenesis. In the nucleus: acts as a pre-mRNA splicing factor. Involved in acute inflammatory responses including neutrophil activation and adhesion, chemoattraction of monocytes macrophages, opsonization of apoptotic neutrophils, and activation of mast cells. Together with TRIM16, coordinates the recognition of membrane damage with mobilization of the core autophagy regulators ATG16L1 and BECN1 in response to damaged endomembranes. When secreted, interacts with NK cell-activating receptor NCR3/NKp30 acting as an inhibitory ligand which antagonizes NK cell attack. This is Galectin-3 (Lgals3) from Mus musculus (Mouse).